The following is a 292-amino-acid chain: MGDGGAERDRGPKRREEPGGRSGCRGEHRGAEDLRADTGSTSPREIAGTSASSPAGSRESGGDSDGQQALGETDHCRRILVRDAKGTIREIVLPKGLDLDRPKRTRTSFTAEQLYRLEMEFQRCQYVVGRERTELARQLNLSETQVKVWFQNRRTKQKKDQSRDLEKRASSSAFEAFATSNVLRLLEQGRLLSVPRAPSLLALSPGLPGLTAGHRGTSLGDPRNSSQRLNPMPSASASSPLPPPLPAVCFSAAPLLDLPASYKLGSSAFEPYSRLEQQKVGSPGQSDKKADI.

Residues 1 to 36 are compositionally biased toward basic and acidic residues; sequence MGDGGAERDRGPKRREEPGGRSGCRGEHRGAEDLRA. Positions 1–74 are disordered; sequence MGDGGAERDR…DGQQALGETD (74 aa). Polar residues predominate over residues 38 to 55; sequence TGSTSPREIAGTSASSPA. The homeobox DNA-binding region spans 102–161; sequence PKRTRTSFTAEQLYRLEMEFQRCQYVVGRERTELARQLNLSETQVKVWFQNRRTKQKKDQ. The tract at residues 212-241 is disordered; that stretch reads AGHRGTSLGDPRNSSQRLNPMPSASASSPL.

It belongs to the EMX homeobox family.

The protein localises to the nucleus. Its function is as follows. Transcription factor that may function in dorsoventral specification of the forebrain. Regulates the expression of Wnt signaling antagonists including the expression of a truncated TCF7L2 isoform that cannot bind CTNNB1 and acts therefore as a potent dominant-negative Wnt antagonist. Plays a crucial role in eye development and, in particular, in the specification of the ventral optic vesicle. May be a regulator of axial polarization in the retina. The polypeptide is Ventral anterior homeobox 2 (Vax2) (Rattus norvegicus (Rat)).